A 438-amino-acid polypeptide reads, in one-letter code: uncharacterized protein (438 aa).

Residues 1-20 (MNTRLALVLCAVGSGVLSFS) form the signal peptide. The N-palmitoyl cysteine moiety is linked to residue cysteine 21. The S-diacylglycerol cysteine moiety is linked to residue cysteine 21.

The protein resides in the cell membrane. This is an uncharacterized protein from Treponema pallidum (strain Nichols).